Consider the following 287-residue polypeptide: 33 kDa chaperonin (287 aa).

2 disulfide bridges follow: Cys-233–Cys-235 and Cys-266–Cys-269.

Belongs to the HSP33 family. Under oxidizing conditions two disulfide bonds are formed involving the reactive cysteines. Under reducing conditions zinc is bound to the reactive cysteines and the protein is inactive.

The protein resides in the cytoplasm. Its function is as follows. Redox regulated molecular chaperone. Protects both thermally unfolding and oxidatively damaged proteins from irreversible aggregation. Plays an important role in the bacterial defense system toward oxidative stress. In Thermodesulfovibrio yellowstonii (strain ATCC 51303 / DSM 11347 / YP87), this protein is 33 kDa chaperonin.